A 298-amino-acid polypeptide reads, in one-letter code: Small ribosomal subunit protein uS2 (298 aa).

Basic and acidic residues-rich tracts occupy residues 237–259 (QSKELDDKADEKAAKVSHSDGQK) and 280–298 (PKSEKQDNVDAAKLPENKG). Positions 237-298 (QSKELDDKAD…DAAKLPENKG (62 aa)) are disordered.

It belongs to the universal ribosomal protein uS2 family.

This Neorickettsia sennetsu (strain ATCC VR-367 / Miyayama) (Ehrlichia sennetsu) protein is Small ribosomal subunit protein uS2.